We begin with the raw amino-acid sequence, 357 residues long: Thymidine kinase (357 aa).

ATP is bound at residue Gly-17–Thr-24. Glu-45 functions as the Proton acceptor in the catalytic mechanism. ATP is bound at residue Arg-186. Arg-192 provides a ligand contact to substrate.

It belongs to the herpesviridae thymidine kinase family. As to quaternary structure, homodimer.

It carries out the reaction thymidine + ATP = dTMP + ADP + H(+). In terms of biological role, catalyzes the transfer of the gamma-phospho group of ATP to thymidine to generate dTMP in the salvage pathway of pyrimidine synthesis. The dTMP serves as a substrate for DNA polymerase during viral DNA replication. Allows the virus to be reactivated and to grow in non-proliferative cells lacking a high concentration of phosphorylated nucleic acid precursors. The polypeptide is Thymidine kinase (Bovine herpesvirus 1 (strain 6660) (BoHV-1)).